The chain runs to 364 residues: Ribosomal RNA small subunit methyltransferase H (364 aa).

S-adenosyl-L-methionine is bound by residues 55–57 (GGH), Asp-75, Phe-101, Asp-122, and Gln-129. The segment at 333–364 (LPPGGGAGFVKAGRVPGEPVRGTRAGSKGRRR) is disordered.

This sequence belongs to the methyltransferase superfamily. RsmH family.

It is found in the cytoplasm. It carries out the reaction cytidine(1402) in 16S rRNA + S-adenosyl-L-methionine = N(4)-methylcytidine(1402) in 16S rRNA + S-adenosyl-L-homocysteine + H(+). Functionally, specifically methylates the N4 position of cytidine in position 1402 (C1402) of 16S rRNA. The polypeptide is Ribosomal RNA small subunit methyltransferase H (Bordetella bronchiseptica (strain ATCC BAA-588 / NCTC 13252 / RB50) (Alcaligenes bronchisepticus)).